The sequence spans 1180 residues: DNA-directed RNA polymerase subunit beta (1180 aa).

Over residues 1154–1164 (EMKELDDEDEQ) the composition is skewed to acidic residues. The segment at 1154 to 1180 (EMKELDDEDEQASDKLNLNIDSTESNV) is disordered. The span at 1167–1180 (DKLNLNIDSTESNV) shows a compositional bias: polar residues.

Belongs to the RNA polymerase beta chain family. In terms of assembly, the RNAP catalytic core consists of 2 alpha, 1 beta, 1 beta' and 1 omega subunit. When a sigma factor is associated with the core the holoenzyme is formed, which can initiate transcription.

It carries out the reaction RNA(n) + a ribonucleoside 5'-triphosphate = RNA(n+1) + diphosphate. Functionally, DNA-dependent RNA polymerase catalyzes the transcription of DNA into RNA using the four ribonucleoside triphosphates as substrates. This is DNA-directed RNA polymerase subunit beta from Halalkalibacterium halodurans (strain ATCC BAA-125 / DSM 18197 / FERM 7344 / JCM 9153 / C-125) (Bacillus halodurans).